A 100-amino-acid chain; its full sequence is Urease subunit gamma (100 aa).

This sequence belongs to the urease gamma subunit family. In terms of assembly, heterotrimer of UreA (gamma), UreB (beta) and UreC (alpha) subunits. Three heterotrimers associate to form the active enzyme.

Its subcellular location is the cytoplasm. The enzyme catalyses urea + 2 H2O + H(+) = hydrogencarbonate + 2 NH4(+). It functions in the pathway nitrogen metabolism; urea degradation; CO(2) and NH(3) from urea (urease route): step 1/1. The chain is Urease subunit gamma from Thioalkalivibrio sulfidiphilus (strain HL-EbGR7).